Reading from the N-terminus, the 547-residue chain is Kelch repeat and BTB domain-containing protein 2 (547 aa).

Positions 20 to 89 constitute a BTB domain; the sequence is CDVIITIGDG…LYNRHISSMN (70 aa). Kelch repeat units lie at residues 295 to 342, 343 to 389, and 391 to 454; these read DIII…VIDD, TIYA…VLDQ, and IYII…SHKD.

In terms of assembly, interacts (via BTB domain) with host CUL3.

The protein resides in the host cytoplasm. Probable substrate-specific adapter of CUL3-containing E3 ubiquitin-protein ligases which mediate the ubiquitination and subsequent proteasomal degradation of host target proteins. The chain is Kelch repeat and BTB domain-containing protein 2 (KBTB2) from Bos taurus (Bovine).